We begin with the raw amino-acid sequence, 81 residues long: Conotoxin Cl9.6 (81 aa).

Residues 1 to 20 (MSTLGMTLLILLLLLPLATP) form the signal peptide. Residues 21 to 40 (DDVGQPPKRDTLRNLLKIGT) constitute a propeptide that is removed on maturation. 3 disulfide bridges follow: C46–C69, C54–C76, and C60–C78.

As to expression, expressed by the venom duct.

The protein localises to the secreted. This Californiconus californicus (California cone) protein is Conotoxin Cl9.6.